The chain runs to 297 residues: Transmembrane protein 169 (297 aa).

The disordered stretch occupies residues 1-85 (MEEPTAVEGQ…KEEEGDDFLD (85 aa)). Topologically, residues 1 to 159 (MEEPTAVEGQ…CQMGADRGPH (159 aa)) are extracellular. Over residues 61 to 85 (KTDEEPGESEGGDQPKEEEGDDFLD) the composition is skewed to acidic residues. Residues 160–180 (VVLWTLICLPVVFILSFVVSF) form a helical membrane-spanning segment. Topologically, residues 181–210 (YYGTITWYNIFLVYNEERTFWHKISYCPCL) are cytoplasmic. The helical transmembrane segment at 211–231 (VLFYPVLIMAMASSLGLYAAV) threads the bilayer. Residues 232 to 297 (VQLSWSWEAW…PIQEVETSTV (66 aa)) are Extracellular-facing.

It localises to the membrane. The sequence is that of Transmembrane protein 169 (TMEM169) from Homo sapiens (Human).